Reading from the N-terminus, the 258-residue chain is Phosphate import ATP-binding protein PstB (258 aa).

The ABC transporter domain maps to 5 to 253 (LDLNDVNIYY…PTKKETEDYI (249 aa)). 37 to 44 (GPSGCGKS) contacts ATP.

Belongs to the ABC transporter superfamily. Phosphate importer (TC 3.A.1.7) family. In terms of assembly, the complex is composed of two ATP-binding proteins (PstB), two transmembrane proteins (PstC and PstA) and a solute-binding protein (PstS).

The protein resides in the cell membrane. The catalysed reaction is phosphate(out) + ATP + H2O = ADP + 2 phosphate(in) + H(+). Functionally, part of the ABC transporter complex PstSACB involved in phosphate import. Responsible for energy coupling to the transport system. The polypeptide is Phosphate import ATP-binding protein PstB (Corynebacterium jeikeium (strain K411)).